We begin with the raw amino-acid sequence, 174 residues long: Nascent polypeptide-associated complex subunit alpha (174 aa).

S2 carries the N-acetylserine modification. An NAC-A/B domain is found at 14–78; sequence NKNEKKAREL…AKVDNFTQKL (65 aa). The tract at residues 85–137 is disordered; sequence AQASGIMPSNEDVATKSPEDIQADMQAAAEGSVNAAAEEDDEEGEVDAGDLNK. Residue S93 is modified to Phosphoserine. The span at 111-120 shows a compositional bias: low complexity; it reads AAAEGSVNAA. Over residues 121-132 the composition is skewed to acidic residues; sequence AEEDDEEGEVDA. The UBA domain maps to 135–174; the sequence is LNKDDIELVVQQTNVSKNQAIKALKAHNGDLVNAIMSLSK.

The protein belongs to the NAC-alpha family. As to quaternary structure, part of the nascent polypeptide-associated complex (NAC), consisting of EGD2 and either EGD1 or BTT1. NAC associates with ribosomes via EGD1 or BTT1, and with the CCR4-NOT complex.

It is found in the cytoplasm. Its subcellular location is the nucleus. Functionally, component of the nascent polypeptide-associated complex (NAC), a dynamic component of the ribosomal exit tunnel, protecting the emerging polypeptides from interaction with other cytoplasmic proteins to ensure appropriate nascent protein targeting. The NAC complex also promotes mitochondrial protein import by enhancing productive ribosome interactions with the outer mitochondrial membrane and blocks the inappropriate interaction of ribosomes translating non-secretory nascent polypeptides with translocation sites in the membrane of the endoplasmic reticulum. EGD2 may also be involved in transcription regulation. This Saccharomyces cerevisiae (strain YJM789) (Baker's yeast) protein is Nascent polypeptide-associated complex subunit alpha (EGD2).